A 282-amino-acid chain; its full sequence is Heat stress transcription factor A-7b (282 aa).

Composition is skewed to low complexity over residues 1–11 and 120–134; these read MDPSSSSRARS and SSSS…QSQP. Disordered regions lie at residues 1-24 and 117-139; these read MDPS…LQEA and RRTS…AHDP. Residues 26–120 mediate DNA binding; that stretch reads PSPFLTKTFE…LLKSIKRRTS (95 aa). A hydrophobic repeat HR-A/B region spans residues 137–196; the sequence is HDPGVELPQLREERHVLMMEISTLRQEEQRARGYVQAMEQRINGAEKKQRHMMSFLRRAV. Positions 208-212 match the Nuclear localization signal motif; the sequence is QKRDR. The Nuclear export signal signature appears at 232–240; that stretch reads LSELEALAL. The AHA motif lies at 259–268; that stretch reads DGFWEELLMN.

This sequence belongs to the HSF family. Class A subfamily. Homotrimer. In terms of processing, exhibits temperature-dependent phosphorylation.

The protein localises to the cytoplasm. It is found in the nucleus. Its function is as follows. Transcriptional activator that specifically binds DNA sequence 5'-AGAAnnTTCT-3' known as heat shock promoter elements (HSE). This chain is Heat stress transcription factor A-7b (HSFA7B), found in Arabidopsis thaliana (Mouse-ear cress).